Reading from the N-terminus, the 348-residue chain is Selenide, water dikinase (348 aa).

C17 is a catalytic residue. ATP is bound by residues K20 and 47–49 (RAD). D50 contributes to the Mg(2+) binding site. ATP contacts are provided by residues D67, D90, and 138-140 (GHT). Position 90 (D90) interacts with Mg(2+). Residue D226 participates in Mg(2+) binding.

The protein belongs to the selenophosphate synthase 1 family. Class I subfamily. As to quaternary structure, homodimer. It depends on Mg(2+) as a cofactor.

The enzyme catalyses hydrogenselenide + ATP + H2O = selenophosphate + AMP + phosphate + 2 H(+). Synthesizes selenophosphate from selenide and ATP. This is Selenide, water dikinase from Pelobacter propionicus (strain DSM 2379 / NBRC 103807 / OttBd1).